The chain runs to 382 residues: MKKQIAILGSTGSIGTQALQVIEEHPDLYEVYALTANNRVDLLVEQARKFMPEAVVIANEEKYLQLKEALSDLPVKVYAGADALSQIVESQPIDIVLASMVGYAGLRPTINAIKAGKAIALANKETLVVAGELINALANQYHTPVLPVDSEHSAIFQCLEINNRLEKVILTASGGPFRTYTMEQLQTVTKAQALKHPNWEMGAKITIDSASMMNKGFEVIEAKWLFGMRPEQIEVVVHPQSVIHSMVQFEDGAVKAQLGMPDMRLPIQYAFSYPERVKSSFERLDFARITDLTFEQPDTKRFRNLALAYEALYRAGNMPCIVNAANEVVVDAFLKDKISFLGMSDVIEQTMGKVAYIKEPTYEDYVDTDAEARRVALSLLSS.

The NADPH site is built by Thr-11, Gly-12, Ser-13, Ile-14, and Asn-123. Lys-124 serves as a coordination point for 1-deoxy-D-xylulose 5-phosphate. Glu-125 provides a ligand contact to NADPH. Asp-149 lines the Mn(2+) pocket. Residues Ser-150, Glu-151, Ser-173, and His-196 each coordinate 1-deoxy-D-xylulose 5-phosphate. A Mn(2+)-binding site is contributed by Glu-151. Gly-202 lines the NADPH pocket. 1-deoxy-D-xylulose 5-phosphate is bound by residues Ser-209, Asn-214, Lys-215, and Glu-218. Position 218 (Glu-218) interacts with Mn(2+).

It belongs to the DXR family. Mg(2+) serves as cofactor. The cofactor is Mn(2+).

It carries out the reaction 2-C-methyl-D-erythritol 4-phosphate + NADP(+) = 1-deoxy-D-xylulose 5-phosphate + NADPH + H(+). It functions in the pathway isoprenoid biosynthesis; isopentenyl diphosphate biosynthesis via DXP pathway; isopentenyl diphosphate from 1-deoxy-D-xylulose 5-phosphate: step 1/6. In terms of biological role, catalyzes the NADPH-dependent rearrangement and reduction of 1-deoxy-D-xylulose-5-phosphate (DXP) to 2-C-methyl-D-erythritol 4-phosphate (MEP). The chain is 1-deoxy-D-xylulose 5-phosphate reductoisomerase from Phocaeicola vulgatus (strain ATCC 8482 / DSM 1447 / JCM 5826 / CCUG 4940 / NBRC 14291 / NCTC 11154) (Bacteroides vulgatus).